A 449-amino-acid polypeptide reads, in one-letter code: C4-dicarboxylate transport protein (449 aa).

The next 8 membrane-spanning stretches (helical) occupy residues 18–38, 61–81, 93–113, 159–179, 202–222, 244–264, 346–366, and 369–389; these read PFYL…ALLG, MIIS…VAHV, VYFL…AHVV, FVGD…IALA, LVQM…AFTI, SLLF…FSIL, LFLV…AGFI, and AATL…ILGV.

It belongs to the dicarboxylate/amino acid:cation symporter (DAACS) (TC 2.A.23) family.

The protein resides in the cell inner membrane. Responsible for the transport of dicarboxylates such as succinate, fumarate, and malate from the periplasm across the membrane. This chain is C4-dicarboxylate transport protein, found in Xylella fastidiosa (strain M23).